The primary structure comprises 457 residues: uncharacterized protein (457 aa).

Positions 5–63 constitute a TRAM domain; it reads PVKKNDVIEVEIIDLTHEGLGVAKVDHYPLFIENALPGEKLEIKVLKTGKSFGYGKVLT. Residues Gln287, Tyr316, Glu337, and Asp385 each contribute to the S-adenosyl-L-methionine site. The active-site Nucleophile is Cys412.

It belongs to the class I-like SAM-binding methyltransferase superfamily. RNA M5U methyltransferase family.

This is an uncharacterized protein from Enterococcus faecalis (strain ATCC 700802 / V583).